Consider the following 489-residue polypeptide: UDP-N-acetylmuramate--L-alanine ligase (489 aa).

130–136 (GTHGKTS) is a binding site for ATP.

The protein belongs to the MurCDEF family.

It localises to the cytoplasm. It carries out the reaction UDP-N-acetyl-alpha-D-muramate + L-alanine + ATP = UDP-N-acetyl-alpha-D-muramoyl-L-alanine + ADP + phosphate + H(+). Its pathway is cell wall biogenesis; peptidoglycan biosynthesis. In terms of biological role, cell wall formation. The chain is UDP-N-acetylmuramate--L-alanine ligase from Corynebacterium efficiens (strain DSM 44549 / YS-314 / AJ 12310 / JCM 11189 / NBRC 100395).